The following is an 85-amino-acid chain: MRKVILKLIRFYQKYISPLKPPTCRFEPTCSTYTYQAVERFGILKGLLLGFWRVLRCNPISKGGHDPVPTEFYLFKKSNNSLRRR.

It belongs to the UPF0161 family.

It localises to the cell inner membrane. Could be involved in insertion of integral membrane proteins into the membrane. The sequence is that of Putative membrane protein insertion efficiency factor from Fervidobacterium nodosum (strain ATCC 35602 / DSM 5306 / Rt17-B1).